Reading from the N-terminus, the 313-residue chain is HPr kinase/phosphorylase (313 aa).

Active-site residues include H141 and K162. Residue 156–163 coordinates ATP; it reads GKSGIGKS. S163 is a Mg(2+) binding site. D180 acts as the Proton acceptor; for phosphorylation activity. Proton donor; for dephosphorylation activity in catalysis. Residues 203–212 form an important for the catalytic mechanism of both phosphorylation and dephosphorylation region; it reads IEIRGIGIFD. Residue E204 participates in Mg(2+) binding. Residue R247 is part of the active site. An important for the catalytic mechanism of dephosphorylation region spans residues 268 to 273; it reads PVSAGR.

It belongs to the HPrK/P family. In terms of assembly, homohexamer. The cofactor is Mg(2+).

It carries out the reaction [HPr protein]-L-serine + ATP = [HPr protein]-O-phospho-L-serine + ADP + H(+). The enzyme catalyses [HPr protein]-O-phospho-L-serine + phosphate + H(+) = [HPr protein]-L-serine + diphosphate. In terms of biological role, catalyzes the ATP- as well as the pyrophosphate-dependent phosphorylation of a specific serine residue in HPr, a phosphocarrier protein of the phosphoenolpyruvate-dependent sugar phosphotransferase system (PTS). HprK/P also catalyzes the pyrophosphate-producing, inorganic phosphate-dependent dephosphorylation (phosphorolysis) of seryl-phosphorylated HPr (P-Ser-HPr). The two antagonistic activities of HprK/P are regulated by several intracellular metabolites, which change their concentration in response to the absence or presence of rapidly metabolisable carbon sources (glucose, fructose, etc.) in the growth medium. Therefore, by controlling the phosphorylation state of HPr, HPrK/P is a sensor enzyme that plays a major role in the regulation of carbon metabolism and sugar transport: it mediates carbon catabolite repression (CCR), and regulates PTS-catalyzed carbohydrate uptake and inducer exclusion. This chain is HPr kinase/phosphorylase, found in Mycoplasma mycoides subsp. mycoides SC (strain CCUG 32753 / NCTC 10114 / PG1).